We begin with the raw amino-acid sequence, 183 residues long: Ribosome maturation factor RimM (183 aa).

One can recognise a PRC barrel domain in the interval 103–183; sequence EEGDYYWKDL…SIEVDWDPGF (81 aa).

The protein belongs to the RimM family. As to quaternary structure, binds ribosomal protein uS19.

It is found in the cytoplasm. Functionally, an accessory protein needed during the final step in the assembly of 30S ribosomal subunit, possibly for assembly of the head region. Essential for efficient processing of 16S rRNA. May be needed both before and after RbfA during the maturation of 16S rRNA. It has affinity for free ribosomal 30S subunits but not for 70S ribosomes. The sequence is that of Ribosome maturation factor RimM from Escherichia coli O157:H7 (strain EC4115 / EHEC).